Here is a 414-residue protein sequence, read N- to C-terminus: tRNA methyltransferase 10 homolog C (414 aa).

The transit peptide at 1-35 (MNVTVRFLRPFARYLVPYTFHRTRSNSYSRVLQRY) directs the protein to the mitochondrion. Serine 79 bears the Phosphoserine mark. A coiled-coil region spans residues 133 to 162 (GKEMMKKAKQMKKEMKAAAREEAKRARSLE). Residues 186-378 (LGWKGVQAMQ…KFVPRRKHTG (193 aa)) form the SAM-dependent MTase TRM10-type domain.

Belongs to the class IV-like SAM-binding methyltransferase superfamily. TRM10 family. Component of mitochondrial ribonuclease P, a complex composed of TRMT10C/MRPP1, HSD17B10/MRPP2 and PRORP/MRPP3. Interacts with HSD17B10/MRPP2; forming the MRPP1-MRPP2 subcomplex of the mitochondrial ribonuclease P complex. Interacts with GRSF1.

The protein localises to the mitochondrion matrix. It localises to the mitochondrion nucleoid. It carries out the reaction adenosine(9) in tRNA + S-adenosyl-L-methionine = N(1)-methyladenosine(9) in tRNA + S-adenosyl-L-homocysteine + H(+). The catalysed reaction is guanosine(9) in tRNA + S-adenosyl-L-methionine = N(1)-methylguanosine(9) in tRNA + S-adenosyl-L-homocysteine + H(+). The enzyme catalyses an adenosine in mRNA + S-adenosyl-L-methionine = an N(1)-methyladenosine in mRNA + S-adenosyl-L-homocysteine + H(+). Mitochondrial tRNA N(1)-methyltransferase involved in mitochondrial tRNA maturation. Component of mitochondrial ribonuclease P, a complex composed of TRMT10C/MRPP1, HSD17B10/MRPP2 and PRORP/MRPP3, which cleaves tRNA molecules in their 5'-ends. Together with HSD17B10/MRPP2, forms a subcomplex of the mitochondrial ribonuclease P, named MRPP1-MRPP2 subcomplex, which displays functions that are independent of the ribonuclease P activity. The MRPP1-MRPP2 subcomplex catalyzes the formation of N(1)-methylguanine and N(1)-methyladenine at position 9 (m1G9 and m1A9, respectively) in tRNAs; TRMT10C/MRPP1 acting as the catalytic N(1)-methyltransferase subunit. The MRPP1-MRPP2 subcomplex also acts as a tRNA maturation platform: following 5'-end cleavage by the mitochondrial ribonuclease P complex, the MRPP1-MRPP2 subcomplex enhances the efficiency of 3'-processing catalyzed by ELAC2, retains the tRNA product after ELAC2 processing and presents the nascent tRNA to the mitochondrial CCA tRNA nucleotidyltransferase TRNT1 enzyme. In addition to tRNA N(1)-methyltransferase activity, TRMT10C/MRPP1 also acts as a mRNA N(1)-methyltransferase by mediating methylation of adenosine residues at the N(1) position of MT-ND5 mRNA. Associates with mitochondrial DNA complexes at the nucleoids to initiate RNA processing and ribosome assembly. This is tRNA methyltransferase 10 homolog C from Rattus norvegicus (Rat).